We begin with the raw amino-acid sequence, 500 residues long: Lysine--tRNA ligase (500 aa).

Mg(2+) is bound by residues glutamate 410 and glutamate 417.

This sequence belongs to the class-II aminoacyl-tRNA synthetase family. Homodimer. Mg(2+) serves as cofactor.

It is found in the cytoplasm. The enzyme catalyses tRNA(Lys) + L-lysine + ATP = L-lysyl-tRNA(Lys) + AMP + diphosphate. The protein is Lysine--tRNA ligase of Shewanella frigidimarina (strain NCIMB 400).